Here is a 167-residue protein sequence, read N- to C-terminus: Ubiquitin-fold modifier-conjugating enzyme 1 (167 aa).

The active-site Glycyl thioester intermediate is C116. A Glycyl lysine isopeptide (Lys-Gly) (interchain with G-Cter in UFM1) cross-link involves residue K122.

The protein belongs to the ubiquitin-conjugating enzyme family. UFC1 subfamily. Interacts with UBA5 (via C-terminus). Interacts with UFL1. Interacts with UFM1. Interacts with KIRREL3. Ufmylated at Lys-122. Deufmylated by UFSP1.

In terms of biological role, E2-like enzyme which specifically catalyzes the second step in ufmylation. Accepts the ubiquitin-like modifier UFM1 from the E1 enzyme UBA5 and forms an intermediate with UFM1 via a thioester linkage. Ufmylation is involved in various processes, such as ribosome recycling, response to DNA damage, interferon response or reticulophagy (also called ER-phagy). This is Ubiquitin-fold modifier-conjugating enzyme 1 from Bos taurus (Bovine).